We begin with the raw amino-acid sequence, 611 residues long: Poly(3-hydroxyalkanoate) polymerase subunit PhaC (611 aa).

Cys-349 is an active-site residue.

This sequence belongs to the PHA/PHB synthase family. Type I PhaC subfamily. In terms of assembly, monomer.

The protein localises to the cytoplasm. The catalysed reaction is (3R)-3-hydroxybutanoyl-CoA + [(3R)-hydroxybutanoate](n) = [(3R)-hydroxybutanoate](n+1) + CoA. Its pathway is biopolymer metabolism; poly-(R)-3-hydroxybutanoate biosynthesis. Its function is as follows. Polymerizes D(-)-3-hydroxybutyryl-CoA to create PHB which consists of thousands of hydroxybutyrate molecules linked end to end. PHB serves as an intracellular energy reserve material when cells grow under conditions of nutrient limitation. The chain is Poly(3-hydroxyalkanoate) polymerase subunit PhaC from Rhizobium meliloti (strain 1021) (Ensifer meliloti).